The following is a 304-amino-acid chain: tRNA uridine(34) hydroxylase (304 aa).

The Rhodanese domain maps to 124 to 219 (QDEETLLIDT…YLETIPKEES (96 aa)). C179 (cysteine persulfide intermediate) is an active-site residue.

Belongs to the TrhO family.

The catalysed reaction is uridine(34) in tRNA + AH2 + O2 = 5-hydroxyuridine(34) in tRNA + A + H2O. Functionally, catalyzes oxygen-dependent 5-hydroxyuridine (ho5U) modification at position 34 in tRNAs. In Bartonella quintana (strain Toulouse) (Rochalimaea quintana), this protein is tRNA uridine(34) hydroxylase.